We begin with the raw amino-acid sequence, 443 residues long: FLYWCH-type zinc finger-containing protein peb-1 (443 aa).

Residues 22-49 (KPGSSDISSSSTDTSAISPISVSSMPLS) are disordered. Over residues 25-42 (SSDISSSSTDTSAISPIS) the composition is skewed to low complexity. A DNA-binding region (required for DNA-binding) is located at residues 46–203 (MPLSPDKEKK…RNKDGKPKKP (158 aa)). The FLYWCH-type zinc-finger motif lies at 69–135 (IVTSFKGYQK…NACTKGSHNH (67 aa)). The tract at residues 251-271 (PTIQIPQPIPTPIQHQQQEQS) is disordered.

It is found in the nucleus. In terms of biological role, putative transcription factor. Binds to specific sequence motif 5'-[TC][AGT]TGCC[GA][AT]-3' in regulatory elements of target genes such as myosin myo-2. May modulate gene expression, perhaps acting in opposition to transcription factor pha-4. Involved in morphogenesis, perhaps especially in formation of the pharynx. Plays roles in molting, feeding and morphology. This Caenorhabditis elegans protein is FLYWCH-type zinc finger-containing protein peb-1.